Consider the following 498-residue polypeptide: ADP,ATP carrier protein 1 (498 aa).

The Cytoplasmic segment spans residues 1 to 33; sequence MSTSKSENYLSELRKIIWPIEQYENKKFLPLAF. The chain crosses the membrane as a helical span at residues 34–54; it reads MMFCILLNYSTLRSIKDGFVV. Cys37 and Cys85 are disulfide-bonded. The Extracellular portion of the chain corresponds to 55–67; it reads TDIGTESISFLKT. The chain crosses the membrane as a helical span at residues 68-88; it reads YIVLPSAVIAMIIYVKLCDIL. At 89-92 the chain is on the cytoplasmic side; that stretch reads KQEN. Residues 93–113 traverse the membrane as a helical segment; it reads VFYVITSFFLGYFALFAFVLY. Residues 114–147 are Extracellular-facing; it reads PYPDLVHPDHKTIESLSLAYPNFKWFIKIVGKWS. The chain crosses the membrane as a helical span at residues 148 to 168; it reads FASFYTIAELWGTMMLSLLFW. At 169 to 184 the chain is on the cytoplasmic side; sequence QFANQITKIAEAKRFY. A helical transmembrane segment spans residues 185-205; that stretch reads SMFGLLANLALPVTSVVIGYF. Over 206–218 the chain is Extracellular; the sequence is LHEKTQIVAEHLK. Residues 219 to 239 traverse the membrane as a helical segment; sequence FVPLFVIMITSSFLIILTYRW. The Cytoplasmic segment spans residues 240-279; that stretch reads MNKNVLTDPRLYDPALVKEKKTKAKLSFIESLKMIFTSKY. A helical transmembrane segment spans residues 280 to 300; it reads VGYIALLIIAYGVSVNLVEGV. At 301 to 320 the chain is on the extracellular side; sequence WKSKVKELYPTKEAYTIYMG. Residues 321–341 form a helical membrane-spanning segment; sequence QFQFYQGWVAIAFMLIGSNIL. The Cytoplasmic segment spans residues 342-348; that stretch reads RKVSWLT. A helical membrane pass occupies residues 349-369; sequence AAMITPLMMFITGAAFFSFIF. The Extracellular portion of the chain corresponds to 370–379; the sequence is FDSVIAMNLT. The helical transmembrane segment at 380–400 threads the bilayer; that stretch reads GILASSPLTLAVMIGMIQNVL. Residues 401 to 438 are Cytoplasmic-facing; it reads SKGVKYSLFDATKNMAYIPLDKDLRVKGQAAVEVIGGR. Position 436–442 (436–442) interacts with ATP; it reads GGRLGKS. Residues 439 to 459 form a helical membrane-spanning segment; it reads LGKSGGAIIQSTFFILFPVFG. Over 460 to 465 the chain is Extracellular; that stretch reads FIEATP. A helical transmembrane segment spans residues 466 to 486; the sequence is YFASIFFIIVILWIFAVKGLN. Topologically, residues 487 to 498 are cytoplasmic; sequence KEYQVLVNKNEK.

Belongs to the ADP/ATP translocase tlc family.

It is found in the cell membrane. Functionally, provides the rickettsial cell with host ATP in exchange for rickettsial ADP. This is an obligate exchange system. This energy acquiring activity is an important component of rickettsial parasitism. This Rickettsia prowazekii (strain Madrid E) protein is ADP,ATP carrier protein 1 (tlcA).